We begin with the raw amino-acid sequence, 429 residues long: Alpha-L-rhamnosidase rgxB (429 aa).

The signal sequence occupies residues 1 to 20 (MAPIALKILLFTSLIVPSIS). N-linked (GlcNAc...) asparagine glycans are attached at residues N67, N77, N97, N103, N112, N135, and N219. A PbH1 1 repeat occupies 217 to 238 (SKNITLTNWEVVNGDDSISTKA). D231 functions as the Proton donor in the catalytic mechanism. Residues N239, N247, N278, and N344 are each glycosylated (N-linked (GlcNAc...) asparagine). 2 PbH1 repeats span residues 240-260 (STDI…AIGS) and 271-292 (VERL…YFKT). C374 and C380 are joined by a disulfide. 3 N-linked (GlcNAc...) asparagine glycosylation sites follow: N387, N395, and N414.

It belongs to the glycosyl hydrolase 28 family.

Its subcellular location is the secreted. The catalysed reaction is Hydrolysis of terminal non-reducing alpha-L-rhamnose residues in alpha-L-rhamnosides.. Alpha-L-rhamnosidase which is able to degrade p-nitrophenyl-alpha-L-rhamnopyranoside (pnp_Rha). The natural substrate of this enzyme has not been identified yet. This chain is Alpha-L-rhamnosidase rgxB (rgxB), found in Aspergillus niger (strain ATCC MYA-4892 / CBS 513.88 / FGSC A1513).